Reading from the N-terminus, the 351-residue chain is Adenine deaminase (351 aa).

Positions 19, 21, and 208 each coordinate Zn(2+). The active-site Proton donor is Glu211. Residue Asp288 coordinates Zn(2+). Position 289 (Asp289) interacts with substrate.

The protein belongs to the metallo-dependent hydrolases superfamily. Adenosine and AMP deaminases family. Adenine deaminase type 2 subfamily. The cofactor is Zn(2+).

Its subcellular location is the cytoplasm. The protein localises to the nucleus. The catalysed reaction is adenine + H2O + H(+) = hypoxanthine + NH4(+). Its function is as follows. Catalyzes the hydrolytic deamination of adenine to hypoxanthine. Plays an important role in the purine salvage pathway and in nitrogen catabolism. This Aspergillus oryzae (strain ATCC 42149 / RIB 40) (Yellow koji mold) protein is Adenine deaminase (aah1).